A 527-amino-acid chain; its full sequence is Protein PyrBI (527 aa).

The segment at 1–342 is aspartate carbamoyltransferase; that stretch reads MKRDFLGRTL…MFGGALEAPF (342 aa). Positions 343–357 are linker; sequence DTSKKEEKPEEDFII. The tract at residues 368–527 is aspartate carbamoyltransferase regulatory region; sequence VQKEGKRGIK…PHSFEEIWSI (160 aa). The Zn(2+) site is built by Cys-483, Cys-488, Cys-512, and Cys-515.

It in the N-terminal section; belongs to the aspartate/ornithine carbamoyltransferase superfamily. ATCase family. In the C-terminal section; belongs to the PyrI family.

The enzyme catalyses carbamoyl phosphate + L-aspartate = N-carbamoyl-L-aspartate + phosphate + H(+). Its pathway is pyrimidine metabolism; UMP biosynthesis via de novo pathway; (S)-dihydroorotate from bicarbonate: step 2/3. The sequence is that of Protein PyrBI (pyrBI) from Thermotoga maritima (strain ATCC 43589 / DSM 3109 / JCM 10099 / NBRC 100826 / MSB8).